Here is a 384-residue protein sequence, read N- to C-terminus: Cobalt-precorrin-5B C(1)-methyltransferase (384 aa).

Belongs to the CbiD family.

It carries out the reaction Co-precorrin-5B + S-adenosyl-L-methionine = Co-precorrin-6A + S-adenosyl-L-homocysteine. Its pathway is cofactor biosynthesis; adenosylcobalamin biosynthesis; cob(II)yrinate a,c-diamide from sirohydrochlorin (anaerobic route): step 6/10. Catalyzes the methylation of C-1 in cobalt-precorrin-5B to form cobalt-precorrin-6A. In Marinomonas sp. (strain MWYL1), this protein is Cobalt-precorrin-5B C(1)-methyltransferase.